A 334-amino-acid polypeptide reads, in one-letter code: Glycosylinositol phosphorylceramide mannosyl transferase 1 (334 aa).

The Cytoplasmic portion of the chain corresponds to 1 to 26 (MGGGEVSKEMGACSLAYRRGDQKLRK). The helical; Signal-anchor for type II membrane protein transmembrane segment at 27–49 (FVTARSTKFLLFCCIAFVLVTIV) threads the bilayer. At 50–334 (CRSSRPWVNS…AVDSRNLWFW (285 aa)) the chain is on the lumenal side. N-linked (GlcNAc...) asparagine glycosylation occurs at Asn-58. Residues 145–150 (DSLNNR), 166–168 (DDD), Arg-196, and 258–262 (RNCED) each bind substrate. Mn(2+) is bound at residue Asp-168. Cys-260 and Cys-305 form a disulfide bridge. Residue Asp-262 is part of the active site. An N-linked (GlcNAc...) asparagine glycan is attached at Asn-271. Residues 289-302 (STGISSIGGHTEKR) and 292-302 (ISSIGGHTEKR) contribute to the substrate site.

It belongs to the glycosyltransferase 64 family. The cofactor is Mn(2+). Expressed in leaves, roots, stem, and flowers.

It localises to the golgi apparatus membrane. It participates in protein modification; protein glycosylation. The protein operates within sphingolipid metabolism. Mannosyl transferase (ManT) required for the biosynthesis of mannose-carrying glycosylinositol phosphorylceramides (GIPCs). Maybe involved in cell-cell adhesion that maintains the integrity of organs by providing mechanical strength and facilitating the movement of metabolites throughout the plant during development. Prevents abscisic acid- (ABA-) mediated effects on development (e.g. cell size, flowering time, senescence). Probably implicated in beta-(1,4)-galactan biosynthesis thus being a cell-wall synthesis-related (CWSR) protein. In Arabidopsis thaliana (Mouse-ear cress), this protein is Glycosylinositol phosphorylceramide mannosyl transferase 1.